Reading from the N-terminus, the 851-residue chain is Transforming growth factor beta receptor type 3 (851 aa).

A signal peptide spans 1-20 (MTSHYVIAIFALMSSCLATA). Residues 21-787 (GPEPGALCEL…IFHGLDTLTV (767 aa)) lie on the Extracellular side of the membrane. Cys52 and Cys197 are oxidised to a cystine. Asn141 and Asn492 each carry an N-linked (GlcNAc...) asparagine glycan. Residues 455 to 730 (KCDNEKMIVA…PKCVPPDEAC (276 aa)) enclose the ZP domain. 2 O-linked (Xyl...) (glycosaminoglycan) serine glycosylation sites follow: Ser534 and Ser545. N-linked (GlcNAc...) asparagine glycosylation is found at Asn571, Asn590, and Asn697. 3 disulfide bridges follow: Cys639-Cys705, Cys660-Cys730, and Cys710-Cys723. The tract at residues 737 to 751 (IIWAMMQNKKTFTKP) is interaction with TGF-beta ligand. A helical transmembrane segment spans residues 788–809 (MGIAFAAFVIGALLTGALWYIY). At 810 to 851 (SHTGETAGRQQVPTSPPASENSSAAHSIGSTQSTPCSSSSTA) the chain is on the cytoplasmic side. Residues 816–851 (AGRQQVPTSPPASENSSAAHSIGSTQSTPCSSSSTA) are disordered. Residues 817–834 (GRQQVPTSPPASENSSAA) show a composition bias toward polar residues. A compositionally biased stretch (low complexity) spans 836 to 851 (SIGSTQSTPCSSSSTA). Thr840 is modified (phosphothreonine).

Forms homodimers and homooligomers. Interacts with DYNLT4. Interacts with integrin ITGA5:ITGB1; this interaction promotes the internalization and trafficking of ITGA5:ITGB1 into endocytic vesicles. Interacts with TGFB1, BMP2, BMP5, BMP7 or GDF5 and inhibin A via the ligand binding domains. Interacts with ALK3/BMPR1A; this interaction results in the cell surface retention of BMPR1A. Interacts with ALK6/BMPR1B; this interaction enhances BMPR1B-mediated stimulation of the BMP signaling pathway. Interacts with the scaffolding protein beta-arrestin2/ARRB2; this interaction mediates internalization of TGFBR3 and thus regulates migration, actin cytoskeleton and activation of CDC42. In terms of assembly, (Microbial infection) Interacts with human cytomegalovirus trimer complex composed of gH, gL, and gO; these interactions may promote HCMV cell entry in specific cell types. Extensively modified by glycosaminoglycan groups (GAG). In terms of processing, phosphorylated in the cytoplasmic domain by the type II receptor TGFBR2 at THR-840 to mediate recruitment of ARRB2 and subsequent internalization of TGFBR2 and TGFBR3.

It localises to the cell membrane. The protein localises to the secreted. The protein resides in the extracellular space. It is found in the extracellular matrix. In terms of biological role, cell surface receptor that regulates diverse cellular processes including cell proliferation, differentiation, migration, and apoptosis. Initiates BMP, inhibin, and TGF-beta signaling pathways by interacting with different ligands including TGFB1, BMP2, BMP5, BMP7 or GDF5. Alternatively, acts as a cell surface coreceptor for BMP ligands, serving to enhance ligand binding by differentially regulating BMPR1A/ALK3 and BMPR1B/ALK6 receptor trafficking. Promotes epithelial cell adhesion, focal adhesion formation and integrin signaling during epithelial cell spreading on fibronectin. By interacting with the scaffolding protein beta-arrestin2/ARRB2, regulates migration or actin cytoskeleton and promotes the activation of CDC42 as well as the inhibition of NF-kappa-B. In gonadotrope cells, acts as an inhibin A coreceptor and regulates follicle-stimulating hormone (FSH) levels and female fertility. Plays a role in the inhibition of directed and random cell migration in epithelial cells by altering the actin cytoskeletal organization. Participates in epithelial-mesenchymal transformation (EMT) upon binding to BMP2 or TGFB2, by activating the PAR6/SMURF1/RHOA pathway. (Microbial infection) May act as a receptor for human cytomegalovirus in different cell types by interacting with HCMV trimer composed of GO, GH and GL. In Homo sapiens (Human), this protein is Transforming growth factor beta receptor type 3.